A 187-amino-acid chain; its full sequence is Flavin prenyltransferase LpdB (187 aa).

FMN contacts are provided by residues 10–12 (GAS), Ser-37, 88–91 (SMKT), and Arg-123. Dimethylallyl phosphate-binding residues include Tyr-153 and Lys-169.

This sequence belongs to the UbiX/PAD1 family.

It catalyses the reaction dimethylallyl phosphate + FMNH2 = prenylated FMNH2 + phosphate. Its function is as follows. Involved in tannin degradation. Flavin prenyltransferase that catalyzes the synthesis of the prenylated FMN cofactor (prenyl-FMN) for gallate decarboxylase LpdC. The prenyltransferase is metal-independent and links a dimethylallyl moiety from dimethylallyl monophosphate (DMAP) to the flavin N5 and C6 atoms of FMN. The protein is Flavin prenyltransferase LpdB of Lactiplantibacillus plantarum (strain ATCC BAA-793 / NCIMB 8826 / WCFS1) (Lactobacillus plantarum).